The primary structure comprises 301 residues: Probable alpha-L-glutamate ligase 2 (301 aa).

Positions 104-287 (LQLLSRKSIG…VADKIIQFIE (184 aa)) constitute an ATP-grasp domain. ATP is bound by residues Lys-141, 178–179 (EY), Asp-187, and 211–213 (RSN). Mg(2+)-binding residues include Asp-248, Glu-260, and Asn-262. Asp-248, Glu-260, and Asn-262 together coordinate Mn(2+).

It belongs to the RimK family. It depends on Mg(2+) as a cofactor. Requires Mn(2+) as cofactor.

This Shewanella denitrificans (strain OS217 / ATCC BAA-1090 / DSM 15013) protein is Probable alpha-L-glutamate ligase 2.